The following is a 204-amino-acid chain: Inactive ribonuclease-like protein 9 (204 aa).

The signal sequence occupies residues 1–26; it reads MMRTLITIHPLPLLLLLQQLLQPVQF. 3 disulfides stabilise this stretch: Cys97-Cys152, Cys115-Cys167, and Cys122-Cys129. Residues Asn130 and Asn142 are each glycosylated (N-linked (GlcNAc...) asparagine).

This sequence belongs to the pancreatic ribonuclease family.

It is found in the secreted. Does not exhibit any ribonuclease activity. The protein is Inactive ribonuclease-like protein 9 (RNASE9) of Symphalangus syndactylus (Siamang).